Here is a 205-residue protein sequence, read N- to C-terminus: Outer-membrane lipoprotein LolB (205 aa).

The signal sequence occupies residues 1-17 (MFLRHCITFTLIALLAG). Cys-18 is lipidated: N-palmitoyl cysteine. A lipid anchor (S-diacylglycerol cysteine) is attached at Cys-18.

Belongs to the LolB family. Monomer.

The protein localises to the cell outer membrane. Its function is as follows. Plays a critical role in the incorporation of lipoproteins in the outer membrane after they are released by the LolA protein. The polypeptide is Outer-membrane lipoprotein LolB (Pseudomonas putida (strain W619)).